The sequence spans 482 residues: Interferon-induced protein with tetratricopeptide repeats 5 (482 aa).

TPR repeat units lie at residues 51 to 84 (LALYNLLAYVKHLKGQNKDALECLEQAEEIIQQE), 94 to 127 (LVTWGNYAWVYYHMDQLEEAQKYTGKIGNVCKKL), 138 to 173 (PETDCEKGWALLKFGGKYYQKAKAAFEKALEVEPDN), 181 to 214 (AITVYRLDDSDREGSVKSFSLGPLRKAVTLNPDN), 249 to 282 (PYVLRYAAKFYRRKNSWNKALELLKKALEVTPTS), 338 to 371 (AFAYTDLANMYAEGGQYSNAEDIFRKALRLENIT), 376 to 410 (HQIHYHYGRFQEFHRKSENTAIHHYLEALKVKDRS), and 435 to 468 (VQSLSALGFVYKLEGEKRQAAEYYEKAQKIDPEN). The tract at residues 254–260 (YAAKFYR) is interaction with the 5'-triphosphate group of PPP-RNA.

This sequence belongs to the IFIT family. As to quaternary structure, monomer. Interacts with MAP3K7 and the components of the IKK core complex CHUK, IKBKB and IKBKG; the interaction synergizes the recruitment of IKK to MAP3K7 and enhances IKK phosphorylation.

It is found in the cell projection. Its subcellular location is the ruffle membrane. Functionally, interferon-induced RNA-binding protein involved in the human innate immune response. Has a broad and adaptable RNA structure recognition important for RNA recognition specificity in antiviral defense. Binds precursor and processed tRNAs as well as poly-U-tailed tRNA fragments. Specifically binds single-stranded RNA bearing a 5'-triphosphate group (PPP-RNA), thereby acting as a sensor of viral single-stranded RNAs. Single-stranded PPP-RNAs, which lack 2'-O-methylation of the 5' cap and bear a 5'-triphosphate group instead, are specific from viruses, providing a molecular signature to distinguish between self and non-self mRNAs by the host during viral infection. Directly binds PPP-RNA in a non-sequence-specific manner. Also recognizes and selectively binds AT-rich dsDNA. Additionally, as a mediator in innate immunity, positively regulates IKK-NFKB signaling by sinergizing the recruitment of IKK to MAP3K7. The chain is Interferon-induced protein with tetratricopeptide repeats 5 (IFIT5) from Homo sapiens (Human).